The sequence spans 202 residues: Rho GDP-dissociation inhibitor (202 aa).

An N-acetylalanine modification is found at Ala2. A Phosphothreonine modification is found at Thr27. Ser40 carries the phosphoserine modification.

This sequence belongs to the Rho GDI family.

The protein localises to the cytoplasm. Its function is as follows. Regulates the GDP/GTP exchange reaction of the Rho proteins by inhibiting the dissociation of GDP from them, and the subsequent binding of GTP to them. The sequence is that of Rho GDP-dissociation inhibitor (RDI1) from Saccharomyces cerevisiae (strain ATCC 204508 / S288c) (Baker's yeast).